We begin with the raw amino-acid sequence, 311 residues long: Putative F-box protein At3g28280 (311 aa).

In terms of domain architecture, F-box spans 1 to 43 (MNSLPEDLLAMILVKLPIKIFTTFKIVCTQWESMVDSPYFRDL).

The polypeptide is Putative F-box protein At3g28280 (Arabidopsis thaliana (Mouse-ear cress)).